The chain runs to 415 residues: MEGKAIATSLGGDRVLIFPCSPRSSFVFTSRLSSLPLKRASIGGAVSCSGVNGLTRWNSIVSTRRLVPVRSINSESDSDSDFPHENQQGNPGLGKFKEYQEWDSWTAKFSGGANIPFLMLQLPQIILNTQNLLAGNNTALSAVPWLGMLTGLLGNLSLLSYFAKKREKEAAVVQTLGVVSTHIVLAQLTMAEAMPIQYFVATSAVVTIGLIVNCLYYFGKLSKTVWQLWEDVITIGGLSVLPQIMWSTFVPLVPNSILPGTTAFGIAVAAIIMARTGKLSEKGVRFVGSLSGWTATLMFMWMPVSQMWTNFLNPDNIKGLSSITMLLSMMGNGLMIPRALFIRDLMWLTGSLWATLFYGYGNILCLYLVNCTSQSFFVAATIGLISWIGLALWRDAVAYGHNSPFRSLKELVFGP.

Positions 74 to 93 (SESDSDSDFPHENQQGNPGL) are disordered. 9 helical membrane passes run 139 to 159 (ALSA…LSLL), 176 to 196 (LGVV…AMPI), 199 to 219 (FVAT…YYFG), 231 to 251 (DVIT…TFVP), 252 to 272 (LVPN…AAII), 286 to 306 (FVGS…PVSQ), 322 to 342 (SITM…ALFI), 345 to 365 (LMWL…NILC), and 373 to 393 (SQSF…LALW).

In terms of tissue distribution, expressed in leaves and roots. Expressed in root cap cells.

It localises to the plastid. The protein resides in the chloroplast inner membrane. Probable maltose transporter. Essential for the conversion of starch to sucrose in leaves at night, probably via the export of maltose from the chloroplast. Required for root cap cells formation. This Arabidopsis thaliana (Mouse-ear cress) protein is Maltose excess protein 1, chloroplastic (MEX1).